A 128-amino-acid chain; its full sequence is Lutropin subunit beta (128 aa).

Disulfide bonds link Cys-18/Cys-66, Cys-32/Cys-81, Cys-35/Cys-119, Cys-43/Cys-97, Cys-47/Cys-99, and Cys-102/Cys-109. N-linked (GlcNAc...) asparagine glycosylation occurs at Asn-22.

It belongs to the glycoprotein hormones subunit beta family. In terms of assembly, heterodimer of a common alpha chain and a unique beta chain which confers biological specificity to thyrotropin, lutropin, follitropin and gonadotropin.

It is found in the secreted. Its function is as follows. Promotes spermatogenesis and ovulation by stimulating the testes and ovaries to synthesize steroids. This Struthio camelus (Common ostrich) protein is Lutropin subunit beta (LHB).